A 276-amino-acid polypeptide reads, in one-letter code: uncharacterized protein (276 aa).

The tract at residues 1-70 (MSKAKSPIKS…SDDDEEDSPN (70 aa)) is disordered. The span at 21–35 (VLREKKVKDAEKAEH) shows a compositional bias: basic and acidic residues. Positions 105–183 (GVLYVGRLPH…KLLQCKVIPE (79 aa)) constitute an RRM domain. The disordered stretch occupies residues 249 to 276 (VSHPKAASPVASKKSSKKKNKKVLAAHK). Over residues 252-261 (PKAASPVASK) the composition is skewed to low complexity. Residues 262–276 (KSSKKKNKKVLAAHK) show a composition bias toward basic residues.

Its subcellular location is the nucleus. It localises to the nucleolus. This is an uncharacterized protein from Schizosaccharomyces pombe (strain 972 / ATCC 24843) (Fission yeast).